The primary structure comprises 914 residues: Caprin-2 (914 aa).

Disordered stretches follow at residues 259 to 283 (PLPK…PSGL), 298 to 326 (EFLN…KEDF), 367 to 411 (KTVD…LPKD), 439 to 480 (DGES…SSQR), 495 to 529 (CLSN…PPLY), 608 to 631 (HRSF…PELN), and 718 to 747 (GAGT…AYPL). Positions 264 to 273 (DSQEKTETIK) are enriched in basic and acidic residues. A compositionally biased stretch (polar residues) spans 274–283 (PDSQSRPSGL). Over residues 370–392 (DIVKRSTTDPKEKRQRKKAEQDS) the composition is skewed to basic and acidic residues. The span at 469–480 (KSPSDILPSSQR) shows a compositional bias: polar residues. Positions 508 to 520 (LELHSEDKPRKQA) are enriched in basic and acidic residues. Positions 610-626 (SFTSAKTSSVTTASTQT) are enriched in low complexity. The segment covering 718–738 (GAGTATQRSSAGWSDSSQVSS) has biased composition (polar residues). Residues 780-914 (LTQLRVAFSA…TFSGFLLYQD (135 aa)) form the C1q domain. Aspartate 865 and glutamate 871 together coordinate Ca(2+).

The protein belongs to the caprin family. In terms of assembly, homotrimer; via C1q domain.

Its subcellular location is the cytoplasm. It is found in the cell membrane. In terms of biological role, promotes phosphorylation of the Wnt coreceptor LRP6, leading to increased activity of the canonical Wnt signaling pathway. Facilitates constitutive LRP6 phosphorylation by CDK14/CCNY during G2/M stage of the cell cycle, which may potentiate cells for Wnt signaling. May regulate the transport and translation of mRNAs, modulating for instance the expression of proteins involved in synaptic plasticity in neurons. Involved in regulation of growth as erythroblasts shift from a highly proliferative state towards their terminal phase of differentiation. May be involved in apoptosis. This chain is Caprin-2, found in Danio rerio (Zebrafish).